The sequence spans 306 residues: Acetyl-coenzyme A carboxylase carboxyl transferase subunit beta (306 aa).

The CoA carboxyltransferase N-terminal domain maps to 28–297 (LWIKCPDTGQ…TPAGKPSTPV (270 aa)). The interval 287 to 306 (QTPAGKPSTPVAPEPVPDAA) is disordered. Residues 296–306 (PVAPEPVPDAA) show a composition bias toward pro residues.

The protein belongs to the AccD/PCCB family. As to quaternary structure, acetyl-CoA carboxylase is a heterohexamer composed of biotin carboxyl carrier protein (AccB), biotin carboxylase (AccC) and two subunits each of ACCase subunit alpha (AccA) and ACCase subunit beta (AccD).

It localises to the cytoplasm. The catalysed reaction is N(6)-carboxybiotinyl-L-lysyl-[protein] + acetyl-CoA = N(6)-biotinyl-L-lysyl-[protein] + malonyl-CoA. Its pathway is lipid metabolism; malonyl-CoA biosynthesis; malonyl-CoA from acetyl-CoA: step 1/1. In terms of biological role, component of the acetyl coenzyme A carboxylase (ACC) complex. Biotin carboxylase (BC) catalyzes the carboxylation of biotin on its carrier protein (BCCP) and then the CO(2) group is transferred by the transcarboxylase to acetyl-CoA to form malonyl-CoA. This Methylorubrum populi (strain ATCC BAA-705 / NCIMB 13946 / BJ001) (Methylobacterium populi) protein is Acetyl-coenzyme A carboxylase carboxyl transferase subunit beta.